Here is a 198-residue protein sequence, read N- to C-terminus: Ribonuclease HII (198 aa).

The 188-residue stretch at 11 to 198 (NLIAGVDEVG…GPVKRVLGLV (188 aa)) folds into the RNase H type-2 domain. A divalent metal cation-binding residues include Asp17, Glu18, and Asp109.

Belongs to the RNase HII family. Mn(2+) is required as a cofactor. It depends on Mg(2+) as a cofactor.

It is found in the cytoplasm. It carries out the reaction Endonucleolytic cleavage to 5'-phosphomonoester.. Its function is as follows. Endonuclease that specifically degrades the RNA of RNA-DNA hybrids. In Yersinia enterocolitica serotype O:8 / biotype 1B (strain NCTC 13174 / 8081), this protein is Ribonuclease HII.